A 98-amino-acid polypeptide reads, in one-letter code: Class II hydrophobin 1 (98 aa).

The N-terminal stretch at 1–16 (MQFFTTVVLFAAAAMA) is a signal peptide. Intrachain disulfides connect Cys29/Cys79, Cys39/Cys70, Cys40/Cys52, and Cys80/Cys92.

Belongs to the cerato-ulmin hydrophobin family. Homodimer. Homodimers further self-assemble to form highly ordered films at water-air interfaces through intermolecular interactions. Expressed in mycelium, conidiating mycelium and aerial hyphae.

Its subcellular location is the secreted. The protein resides in the cell wall. In terms of biological role, aerial growth, conidiation, and dispersal of filamentous fungi in the environment rely upon a capability of their secreting small amphipathic proteins called hydrophobins (HPBs) with low sequence identity. Class I can self-assemble into an outermost layer of rodlet bundles on aerial cell surfaces, conferring cellular hydrophobicity that supports fungal growth, development and dispersal; whereas Class II form highly ordered films at water-air interfaces through intermolecular interactions but contribute nothing to the rodlet structure. Hyd1 is a class II hydrophobin that plays probably a role during conidiophore development and in intraspecific signaling or hyphal fusion. Hyd1 and Hyd3 are jointly required for conidial hydrophobicity and dispersal, but seem not to be involved in mycelia hydrophobicity. Inhibits conidial germination in environments not suitable for mycelial growth. Not necessary for root adhesion and colonization. The sequence is that of Class II hydrophobin 1 from Bionectria ochroleuca (Gliocladium roseum).